Reading from the N-terminus, the 1342-residue chain is DNA-directed RNA polymerase subunit beta (1342 aa).

Belongs to the RNA polymerase beta chain family. As to quaternary structure, the RNAP catalytic core consists of 2 alpha, 1 beta, 1 beta' and 1 omega subunit. When a sigma factor is associated with the core the holoenzyme is formed, which can initiate transcription.

It catalyses the reaction RNA(n) + a ribonucleoside 5'-triphosphate = RNA(n+1) + diphosphate. Its function is as follows. DNA-dependent RNA polymerase catalyzes the transcription of DNA into RNA using the four ribonucleoside triphosphates as substrates. This is DNA-directed RNA polymerase subunit beta from Salmonella agona (strain SL483).